The sequence spans 570 residues: MTRYAGLGRTRPKKLTPKAPIPIYREHQIDDLEEEIQNGLQQVETGVEKAEESEYHLQVAINAVASGRVVNEAHIPTPETVLSNLQYDELYPPVFSQPATYIRFSSTVEDCCGCPYNMTDEDDVFLKIMNEKRDPADRCTEDQFEEVMNFFEETVRLKQPYAAVGSAPVLSFAEMQESMDATVEDYVRRLAKDVYDHWKTRRLNNGNQSLLPSLKFETGAETDDTDPYVCFRRREVRQVRKTRGRDAQSADKLRRLRKELEDARQLVALVRQRELARKEMLATERILFLQRAEVKDMKRKLNIKDDDEDLINQKPKKKPIEAPPMQRPAAAQLRMPPKPGAQAAEDLQLLEDVQAEKENEIIRDIKANIAKHMKWNEGYVDFTRAPLSPSPERTVDISFRPAITTQLPTPPSSDSSENTPDLALDMSGTVSYRDKLDEHALIMSEDANKMPSFRRRIGRGGRLLIDRRNFASRCRVELDPWKADRFKYDQEDSDEDLDYEMDQYDISLMQNRAIMLAKARDQAHAQAQAAQVRRLQAEQAALNNLNSGQTSGQTMGSNPGPGAIAPTPET.

The tract at residues 541 to 570 (ALNNLNSGQTSGQTMGSNPGPGAIAPTPET) is disordered. Residues 543 to 557 (NNLNSGQTSGQTMGS) are compositionally biased toward polar residues.

Belongs to the enhancer of polycomb family. As to quaternary structure, component of the NuA4 histone acetyltransferase complex.

The protein localises to the nucleus. Its function is as follows. Component of the NuA4 histone acetyltransferase complex which is involved in transcriptional activation of selected genes principally by acetylation of nucleosomal histone H4 and H2A. The NuA4 complex is also involved in DNA repair. Involved in gene silencing by neighboring heterochromatin, blockage of the silencing spreading along the chromosome, and required for cell cycle progression through G2/M. The sequence is that of Enhancer of polycomb-like protein 1 (epl1) from Emericella nidulans (strain FGSC A4 / ATCC 38163 / CBS 112.46 / NRRL 194 / M139) (Aspergillus nidulans).